The sequence spans 250 residues: 2,3-bisphosphoglycerate-dependent phosphoglycerate mutase (250 aa).

Residues 8–15 (RHGESQWN), 21–22 (TG), arginine 60, 87–90 (ERHY), lysine 98, 114–115 (RR), and 183–184 (GN) each bind substrate. Histidine 9 acts as the Tele-phosphohistidine intermediate in catalysis. Glutamate 87 serves as the catalytic Proton donor/acceptor.

Belongs to the phosphoglycerate mutase family. BPG-dependent PGAM subfamily. In terms of assembly, homodimer.

The enzyme catalyses (2R)-2-phosphoglycerate = (2R)-3-phosphoglycerate. It functions in the pathway carbohydrate degradation; glycolysis; pyruvate from D-glyceraldehyde 3-phosphate: step 3/5. Its function is as follows. Catalyzes the interconversion of 2-phosphoglycerate and 3-phosphoglycerate. In Bordetella parapertussis (strain 12822 / ATCC BAA-587 / NCTC 13253), this protein is 2,3-bisphosphoglycerate-dependent phosphoglycerate mutase.